A 185-amino-acid polypeptide reads, in one-letter code: Ribosome-recycling factor (185 aa).

The protein belongs to the RRF family.

Its subcellular location is the cytoplasm. In terms of biological role, responsible for the release of ribosomes from messenger RNA at the termination of protein biosynthesis. May increase the efficiency of translation by recycling ribosomes from one round of translation to another. This Treponema denticola (strain ATCC 35405 / DSM 14222 / CIP 103919 / JCM 8153 / KCTC 15104) protein is Ribosome-recycling factor.